Here is a 1025-residue protein sequence, read N- to C-terminus: Dihydropyrimidine dehydrogenase [NADP(+)] (1025 aa).

The 4Fe-4S ferredoxin-type 1 domain maps to 69–100; the sequence is ERGALREAVRCLKCADAPCQKSCPTSLDIKSF. Positions 79, 82, 87, and 91 each coordinate [4Fe-4S] cluster. Val-129 is an FAD binding site. Positions 130, 136, 140, and 156 each coordinate [4Fe-4S] cluster. FAD is bound by residues 194–198, 218–226, and Arg-235; these read GAGPA and EKQEYVGGL. NADP(+) is bound by residues 340–343, 364–365, and Arg-371; these read AGDT and RK. N6-acetyllysine is present on Lys-384. NADP(+) is bound by residues 437-439 and 481-487; these read PFG and DVVGMAN. 480–489 provides a ligand contact to FAD; that stretch reads GDVVGMANTT. Residues Ser-550 and 574-575 contribute to the FMN site; that span reads KT. Residues Asn-609 and 668–670 contribute to the substrate site; that span reads NLS. Cys-671 functions as the Proton acceptor in the catalytic mechanism. Lys-709 contributes to the FMN binding site. Substrate is bound at residue 736–737; the sequence is NT. FMN-binding positions include Gly-767, 793-795, and 816-817; these read TGG and CS. A Phosphoserine modification is found at Ser-905. 2 consecutive 4Fe-4S ferredoxin-type domains span residues 944–976 and 978–1007; these read VVALIDEEMCINCGKCYMTCNDSGYQAIQFDPE and HLPTVSDTCTGCTLCLSVCPIMDCIRMVSR. [4Fe-4S] cluster contacts are provided by Cys-953, Cys-956, Cys-959, Cys-963, Cys-986, Cys-989, Cys-992, and Cys-996.

It belongs to the dihydropyrimidine dehydrogenase family. Homodimer. FAD serves as cofactor. The cofactor is FMN. Requires [4Fe-4S] cluster as cofactor.

It localises to the cytoplasm. The catalysed reaction is 5,6-dihydrouracil + NADP(+) = uracil + NADPH + H(+). It carries out the reaction 5,6-dihydrothymine + NADP(+) = thymine + NADPH + H(+). It participates in amino-acid biosynthesis; beta-alanine biosynthesis. With respect to regulation, inactivated by 5-iodouracil. Involved in pyrimidine base degradation. Catalyzes the reduction of uracil and thymine. Also involved the degradation of the chemotherapeutic drug 5-fluorouracil. This Rattus norvegicus (Rat) protein is Dihydropyrimidine dehydrogenase [NADP(+)].